The sequence spans 318 residues: Ubiquinone biosynthesis protein COQ9, mitochondrial (318 aa).

The transit peptide at 1–44 directs the protein to the mitochondrion; the sequence is MAAAAVSGALGRAGWRLLQLRCLPVARCRQALVPRAFHASAVGL. Residues 16–31 carry the SIFI-degron motif; that stretch reads RLLQLRCLPVARCRQA. The interval 44-98 is disordered; that stretch reads LRSSDEQKQQPPNSFSQQHSETQGAEKPDPESSHSPPRYTDQGGEEEEDYESEEQ. Residues 52-66 are compositionally biased toward polar residues; sequence QQPPNSFSQQHSETQ. Positions 86-97 are enriched in acidic residues; it reads GGEEEEDYESEE. Lys-175 bears the N6-acetyllysine mark. Arg-244 contacts a 1,2-diacylglycero-3-phosphoethanolamine.

This sequence belongs to the COQ9 family. As to quaternary structure, homodimer. Heterodimer; two heterodimers of COQ7:COQ9 come together on the same side of the lipid pseudo-bilayer and form a curved tetramer with a hydrophobic surface suitable for membrane interaction. These two tetramers assemble into a soluble octamer with a pseudo-bilayer of lipids captured within. Interacts with COQ7; this interaction allows ubiquinone (CoQ) isoprene intermediates presentation to COQ7 and facilitates the COQ7-mediated hydroxylase step. In response to mitochondrial stress, the precursor protein is ubiquitinated by the SIFI complex in the cytoplasm before mitochondrial import, leading to its degradation. Within the SIFI complex, UBR4 initiates ubiquitin chain that are further elongated or branched by KCMF1.

The protein localises to the mitochondrion. It participates in cofactor biosynthesis; ubiquinone biosynthesis. Functionally, membrane-associated protein that warps the membrane surface to access and bind aromatic isoprenes with high specificity, including ubiquinone (CoQ) isoprene intermediates and presents them directly to COQ7, therefore facilitating the COQ7-mediated hydroxylase step. Participates in the biosynthesis of coenzyme Q, also named ubiquinone, an essential lipid-soluble electron transporter for aerobic cellular respiration. The polypeptide is Ubiquinone biosynthesis protein COQ9, mitochondrial (Homo sapiens (Human)).